A 127-amino-acid polypeptide reads, in one-letter code: Histone H2B.2 (127 aa).

Positions 1-35 are disordered; that stretch reads MAPKAEKKPASKAPAAKKTTASTDASKKRTKTRKE. N6-acetyllysine; alternate occurs at positions 7 and 8. Glycyl lysine isopeptide (Lys-Gly) (interchain with G-Cter in SUMO); alternate cross-links involve residues Lys-7 and Lys-8. Ser-11 is modified (phosphoserine). The span at 11-24 shows a compositional bias: low complexity; sequence SKAPAAKKTTASTD. At Lys-12 the chain carries N6-acetyllysine. Residue Lys-120 forms a Glycyl lysine isopeptide (Lys-Gly) (interchain with G-Cter in ubiquitin) linkage.

It belongs to the histone H2B family. In terms of assembly, the nucleosome is a histone octamer containing two molecules each of H2A, H2B, H3 and H4 assembled in one H3-H4 heterotetramer and two H2A-H2B heterodimers. The octamer wraps approximately 147 bp of DNA. Monoubiquitinated by the UBC2-BRE1 complex to form H2BK123ub1. H2BK123ub1 gives a specific tag for epigenetic transcriptional activation and is also prerequisite for H3K4me and H3K79me formation. H2BK123ub1 also modulates the formation of double-strand breaks during meiosis and is a prerequisite for DNA-damage checkpoint activation. In terms of processing, phosphorylated by STE20 to form H2BS10ph during progression through meiotic prophase. May be correlated with chromosome condensation. Post-translationally, acetylation of N-terminal lysines and particularly formation of H2BK11ac has a positive effect on transcription. Sumoylation to form H2BK6su or H2BK7su occurs preferentially near the telomeres and represses gene transcription.

The protein resides in the nucleus. It is found in the chromosome. Functionally, core component of nucleosome. Nucleosomes wrap and compact DNA into chromatin, limiting DNA accessibility to the cellular machineries which require DNA as a template. Histones thereby play a central role in transcription regulation, DNA repair, DNA replication and chromosomal stability. DNA accessibility is regulated via a complex set of post-translational modifications of histones, also called histone code, and nucleosome remodeling. In Eremothecium gossypii (strain ATCC 10895 / CBS 109.51 / FGSC 9923 / NRRL Y-1056) (Yeast), this protein is Histone H2B.2 (HTB2).